A 1395-amino-acid chain; its full sequence is DNA-directed RNA polymerase subunit beta' (1395 aa).

Zn(2+)-binding residues include Cys-70, Cys-72, Cys-85, and Cys-88. Mg(2+) contacts are provided by Asp-461, Asp-463, and Asp-465. Zn(2+) is bound by residues Cys-815, Cys-889, Cys-896, and Cys-899.

It belongs to the RNA polymerase beta' chain family. In terms of assembly, the RNAP catalytic core consists of 2 alpha, 1 beta, 1 beta' and 1 omega subunit. When a sigma factor is associated with the core the holoenzyme is formed, which can initiate transcription. The cofactor is Mg(2+). Zn(2+) serves as cofactor.

The enzyme catalyses RNA(n) + a ribonucleoside 5'-triphosphate = RNA(n+1) + diphosphate. Its function is as follows. DNA-dependent RNA polymerase catalyzes the transcription of DNA into RNA using the four ribonucleoside triphosphates as substrates. This Ruthia magnifica subsp. Calyptogena magnifica protein is DNA-directed RNA polymerase subunit beta'.